A 372-amino-acid polypeptide reads, in one-letter code: Enoyl-[acyl-carrier-protein] reductase, mitochondrial (372 aa).

A mitochondrion-targeting transit peptide spans 1–18 (MSFFKTAVRRFSSTSITR). Tyr72 (proton donor) is an active-site residue. NADP(+)-binding positions include Asn157, 183 to 186 (NSMV), 206 to 208 (RNR), 279 to 282 (FGGM), 304 to 306 (FWV), and Lys365.

It belongs to the zinc-containing alcohol dehydrogenase family. Quinone oxidoreductase subfamily. Homodimer.

Its subcellular location is the mitochondrion matrix. It catalyses the reaction a 2,3-saturated acyl-[ACP] + NADP(+) = a (2E)-enoyl-[ACP] + NADPH + H(+). Its function is as follows. Catalyzes the NADPH-dependent reduction of trans-2-enoyl thioesters in mitochondrial fatty acid synthesis (fatty acid synthesis type II). Fatty acid chain elongation in mitochondria uses acyl carrier protein (ACP) as an acyl group carrier, but the enzyme accepts both ACP and CoA thioesters as substrates in vitro. Required for respiration and the maintenance of the mitochondrial compartment. The polypeptide is Enoyl-[acyl-carrier-protein] reductase, mitochondrial (etr1) (Schizosaccharomyces pombe (strain 972 / ATCC 24843) (Fission yeast)).